Reading from the N-terminus, the 258-residue chain is Steroid 5-alpha-reductase DET2 (258 aa).

6 helical membrane passes run 8–28 (FHYC…SLYF), 49–69 (LAWF…FPSG), 77–97 (SFLL…LYPL), 109–129 (FPVS…YLQA), 144–164 (LFWW…WVNV), and 201–221 (IMEW…GFFL).

This sequence belongs to the steroid 5-alpha reductase family. In terms of tissue distribution, accumulates in fibers (seed trichomes) during both their initiation and elongation phases. Also present in roots, hypocotyls, leaves, flowers and ovules, and barely in cotyledons.

The protein resides in the membrane. The enzyme catalyses a 3-oxo-5alpha-steroid + NADP(+) = a 3-oxo-Delta(4)-steroid + NADPH + H(+). The protein operates within plant hormone biosynthesis; brassinosteroid biosynthesis. Involved in a reduction step in the biosynthesis of the plant steroid, brassinolide (BL). Promotes cotton fibers (seed trichomes) initiation and elongation. This chain is Steroid 5-alpha-reductase DET2, found in Gossypium hirsutum (Upland cotton).